The sequence spans 183 residues: Transcription termination/antitermination protein NusG (183 aa).

The 31-residue stretch at 131 to 161 (PGEEVRVTEGPFADFNGTVEEVDYEKGRLKV) folds into the KOW domain.

Belongs to the NusG family.

Participates in transcription elongation, termination and antitermination. The chain is Transcription termination/antitermination protein NusG from Pasteurella multocida (strain Pm70).